A 498-amino-acid chain; its full sequence is Glycerol kinase (498 aa).

Thr12 is an ADP binding site. Residues Thr12, Thr13, and Ser14 each contribute to the ATP site. Thr12 serves as a coordination point for sn-glycerol 3-phosphate. Arg16 provides a ligand contact to ADP. Sn-glycerol 3-phosphate-binding residues include Arg82, Glu83, Tyr134, and Asp244. Glycerol is bound by residues Arg82, Glu83, Tyr134, Asp244, and Gln245. Positions 266 and 310 each coordinate ADP. ATP is bound by residues Thr266, Gly310, Gln314, and Gly411. ADP contacts are provided by Gly411 and Asn415.

The protein belongs to the FGGY kinase family.

It carries out the reaction glycerol + ATP = sn-glycerol 3-phosphate + ADP + H(+). The protein operates within polyol metabolism; glycerol degradation via glycerol kinase pathway; sn-glycerol 3-phosphate from glycerol: step 1/1. Its activity is regulated as follows. Inhibited by fructose 1,6-bisphosphate (FBP). In terms of biological role, key enzyme in the regulation of glycerol uptake and metabolism. Catalyzes the phosphorylation of glycerol to yield sn-glycerol 3-phosphate. The protein is Glycerol kinase of Chloroflexus aggregans (strain MD-66 / DSM 9485).